We begin with the raw amino-acid sequence, 293 residues long: NAD kinase (293 aa).

The active-site Proton acceptor is the aspartate 74. Residues 74–75 (DG), 148–149 (NE), histidine 159, arginine 176, aspartate 178, threonine 186, 189–194 (TAYSLS), and glutamine 248 contribute to the NAD(+) site.

It belongs to the NAD kinase family. As to quaternary structure, homodimer. Requires a divalent metal cation as cofactor.

The protein localises to the cytoplasm. It catalyses the reaction NAD(+) + ATP = ADP + NADP(+) + H(+). Its function is as follows. Involved in the regulation of the intracellular balance of NAD and NADP, and is a key enzyme in the biosynthesis of NADP. Catalyzes specifically the phosphorylation on 2'-hydroxyl of the adenosine moiety of NAD to yield NADP. This chain is NAD kinase, found in Yersinia pestis.